Consider the following 209-residue polypeptide: Redox-sensing transcriptional repressor Rex (209 aa).

The segment at residues 16–55 (LYYRFIQNLSLSGKQRVSSAELSEAVKVDSATIRRDFSYF) is a DNA-binding region (H-T-H motif). 90–95 (GVGNLG) serves as a coordination point for NAD(+).

Belongs to the transcriptional regulatory Rex family. Homodimer.

It is found in the cytoplasm. Modulates transcription in response to changes in cellular NADH/NAD(+) redox state. The protein is Redox-sensing transcriptional repressor Rex of Bacillus anthracis (strain A0248).